The following is a 167-amino-acid chain: Small ribosomal subunit protein uS5 (167 aa).

An S5 DRBM domain is found at 12-75 (LEERVVTINR…EDAKKNMVFV (64 aa)).

Belongs to the universal ribosomal protein uS5 family. As to quaternary structure, part of the 30S ribosomal subunit. Contacts proteins S4 and S8.

In terms of biological role, with S4 and S12 plays an important role in translational accuracy. Located at the back of the 30S subunit body where it stabilizes the conformation of the head with respect to the body. In Listeria innocua serovar 6a (strain ATCC BAA-680 / CLIP 11262), this protein is Small ribosomal subunit protein uS5.